A 435-amino-acid polypeptide reads, in one-letter code: Arginine/serine-rich coiled-coil protein 2 (435 aa).

Basic and acidic residues predominate over residues 1–27 (MAASDTERDGLAPEKTSPDRDKKKEQS). Residues 1–230 (MAASDTERDG…PSPPPFRGRN (230 aa)) are disordered. Residue Ala-2 is modified to N-acetylalanine. Ser-4 carries the phosphoserine modification. A phosphothreonine mark is found at Thr-6 and Thr-16. Phosphoserine is present on residues Ser-17, Ser-30, and Ser-32. Residues 35-51 (ASKHHYSRSRSRSRERK) are compositionally biased toward basic residues. Over residues 66–111 (RSKEARRHESKDKSSKKHKSEEHNDKEHSSDKGRERLNSSENGEDR) the composition is skewed to basic and acidic residues. Ser-104 is subject to Phosphoserine. Basic residues predominate over residues 112 to 214 (HKRKERKSSR…KRIEKPRRFS (103 aa)). Positions 230–270 (NTAMDAQEALARRLERAKKLQEQREKEMVEKQKQQEIAAAA) form a coiled coil. A Glycyl lysine isopeptide (Lys-Gly) (interchain with G-Cter in SUMO1); alternate cross-link involves residue Lys-376. Lys-376 participates in a covalent cross-link: Glycyl lysine isopeptide (Lys-Gly) (interchain with G-Cter in SUMO2); alternate. Ser-377 is modified (phosphoserine).

Belongs to the RSRC2 family.

The protein is Arginine/serine-rich coiled-coil protein 2 (RSRC2) of Pongo abelii (Sumatran orangutan).